The following is a 239-amino-acid chain: Protein LIFEGUARD 2 (239 aa).

The next 7 helical transmembrane spans lie at 41–61 (LLVTIAVAATVVKVHSISVFF), 66–86 (AGFALYILLILTPLIVMCPLY), 96–116 (YLLLGIFTVALAFAVGLTCAF), 121–141 (VILESVILTAVVVISLTLYTF), 156–176 (FLFGAVIVLMVFSFIQILFPL), 179–199 (ISVMIYGCLASIIFCGYIVYD), and 213–233 (IWAAVSLYLDVINLFLSLLTL).

It belongs to the BI1 family. In terms of tissue distribution, expressed in seedlings, roots, leaves, inflorescences and flowers.

The protein resides in the membrane. Functionally, regulates the brassinosteroid (BR) signaling pathway that mediates cell elongation and organ morphogenesis. In terms of biological role, (Microbial infection) Facilitates the development of the powdery mildew fungus E.cruciferarum. Its function is as follows. (Microbial infection) May prevent cell death upon A.alternata f.sp. lycopersici (AAL) toxin treatment. The protein is Protein LIFEGUARD 2 of Arabidopsis thaliana (Mouse-ear cress).